Here is a 382-residue protein sequence, read N- to C-terminus: Succinate--CoA ligase [ADP-forming] subunit beta (382 aa).

One can recognise an ATP-grasp domain in the interval Lys-9 to Tyr-240. ATP-binding positions include Lys-45, Gly-52–Gly-54, Val-94, and Glu-99. The Mg(2+) site is built by Asn-193 and Asp-207. Substrate contacts are provided by residues Asn-260 and Gly-317 to Thr-319.

The protein belongs to the succinate/malate CoA ligase beta subunit family. In terms of assembly, heterotetramer of two alpha and two beta subunits. It depends on Mg(2+) as a cofactor.

It catalyses the reaction succinate + ATP + CoA = succinyl-CoA + ADP + phosphate. It carries out the reaction GTP + succinate + CoA = succinyl-CoA + GDP + phosphate. It functions in the pathway carbohydrate metabolism; tricarboxylic acid cycle; succinate from succinyl-CoA (ligase route): step 1/1. In terms of biological role, succinyl-CoA synthetase functions in the citric acid cycle (TCA), coupling the hydrolysis of succinyl-CoA to the synthesis of either ATP or GTP and thus represents the only step of substrate-level phosphorylation in the TCA. The beta subunit provides nucleotide specificity of the enzyme and binds the substrate succinate, while the binding sites for coenzyme A and phosphate are found in the alpha subunit. The protein is Succinate--CoA ligase [ADP-forming] subunit beta of Pyrobaculum arsenaticum (strain DSM 13514 / JCM 11321 / PZ6).